The chain runs to 524 residues: Inosine-5'-monophosphate dehydrogenase (524 aa).

2 CBS domains span residues 121-180 and 184-242; these read FILD…NTPV and MTPR…PLAS. NAD(+)-binding positions include 280-282 and 330-332; these read DSS and GMG. Residues G332 and G334 each contribute to the K(+) site. Position 335 (S335) interacts with IMP. A K(+)-binding site is contributed by C337. Residue C337 is the Thioimidate intermediate of the active site. IMP-binding positions include 370–372, 393–394, and 417–421; these read DGG, GG, and YRGMG. R439 serves as the catalytic Proton acceptor. Q451 is an IMP binding site. Residues E510 and G511 each coordinate K(+).

This sequence belongs to the IMPDH/GMPR family. Homotetramer. Requires K(+) as cofactor.

It localises to the cytoplasm. It catalyses the reaction IMP + NAD(+) + H2O = XMP + NADH + H(+). Its pathway is purine metabolism; XMP biosynthesis via de novo pathway; XMP from IMP: step 1/1. Its activity is regulated as follows. Mycophenolic acid (MPA) is a non-competitive inhibitor that prevents formation of the closed enzyme conformation by binding to the same site as the amobile flap. In contrast, mizoribine monophosphate (MZP) is a competitive inhibitor that induces the closed conformation. MPA is a potent inhibitor of mammalian IMPDHs but a poor inhibitor of the bacterial enzymes. MZP is a more potent inhibitor of bacterial IMPDH. Catalyzes the conversion of inosine 5'-phosphate (IMP) to xanthosine 5'-phosphate (XMP), the first committed and rate-limiting step in the de novo synthesis of guanine nucleotides, and therefore plays an important role in the regulation of cell growth. This is Inosine-5'-monophosphate dehydrogenase (gua1) from Schizosaccharomyces pombe (strain 972 / ATCC 24843) (Fission yeast).